Here is a 436-residue protein sequence, read N- to C-terminus: 3-ketoacyl-CoA thiolase (436 aa).

Cys99 serves as the catalytic Acyl-thioester intermediate. Residues His392 and Cys422 each act as proton acceptor in the active site.

Belongs to the thiolase-like superfamily. Thiolase family. Heterotetramer of two alpha chains (FadJ) and two beta chains (FadI).

The protein localises to the cytoplasm. The enzyme catalyses an acyl-CoA + acetyl-CoA = a 3-oxoacyl-CoA + CoA. The protein operates within lipid metabolism; fatty acid beta-oxidation. Its function is as follows. Catalyzes the final step of fatty acid oxidation in which acetyl-CoA is released and the CoA ester of a fatty acid two carbons shorter is formed. This chain is 3-ketoacyl-CoA thiolase, found in Salmonella paratyphi B (strain ATCC BAA-1250 / SPB7).